The primary structure comprises 331 residues: Glyceraldehyde-3-phosphate dehydrogenase (331 aa).

NAD(+) is bound by residues 12–13 (RI), aspartate 34, arginine 78, and threonine 120. D-glyceraldehyde 3-phosphate-binding positions include 149-151 (SCT), threonine 180, 209-210 (TG), and arginine 232. The Nucleophile role is filled by cysteine 150. Residue asparagine 314 participates in NAD(+) binding.

This sequence belongs to the glyceraldehyde-3-phosphate dehydrogenase family. Homotetramer.

It localises to the cytoplasm. The enzyme catalyses D-glyceraldehyde 3-phosphate + phosphate + NAD(+) = (2R)-3-phospho-glyceroyl phosphate + NADH + H(+). The protein operates within carbohydrate degradation; glycolysis; pyruvate from D-glyceraldehyde 3-phosphate: step 1/5. Its function is as follows. Catalyzes the oxidative phosphorylation of glyceraldehyde 3-phosphate (G3P) to 1,3-bisphosphoglycerate (BPG) using the cofactor NAD. The first reaction step involves the formation of a hemiacetal intermediate between G3P and a cysteine residue, and this hemiacetal intermediate is then oxidized to a thioester, with concomitant reduction of NAD to NADH. The reduced NADH is then exchanged with the second NAD, and the thioester is attacked by a nucleophilic inorganic phosphate to produce BPG. The polypeptide is Glyceraldehyde-3-phosphate dehydrogenase (gapA) (Shimwellia blattae (strain ATCC 29907 / DSM 4481 / JCM 1650 / NBRC 105725 / CDC 9005-74) (Escherichia blattae)).